Here is a 1088-residue protein sequence, read N- to C-terminus: RNA-directed RNA polymerase (1088 aa).

One can recognise a RdRp catalytic domain in the interval 501–687 (LSYGDVTRFL…AKRYIAGGKI (187 aa)).

This sequence belongs to the reoviridae RNA-directed RNA polymerase family. Interacts with VP3 (Potential). Interacts with VP2; this interaction activates VP1. Interacts with NSP5; this interaction is probably necessary for the formation of functional virus factories. Interacts with NSP2; this interaction is weak. Mg(2+) serves as cofactor.

It localises to the virion. It catalyses the reaction RNA(n) + a ribonucleoside 5'-triphosphate = RNA(n+1) + diphosphate. RNA-directed RNA polymerase that is involved in both transcription and genome replication. Together with VP3 capping enzyme, forms an enzyme complex positioned near the channels situated at each of the five-fold vertices of the core. Following infection, the outermost layer of the virus is lost, leaving a double-layered particle (DLP) made up of the core and VP6 shell. VP1 then catalyzes the transcription of fully conservative plus-strand genomic RNAs that are extruded through the DLP's channels into the cytoplasm where they function as mRNAs for translation of viral proteins. One copy of each of the viral (+)RNAs is also recruited during core assembly, together with newly synthesized polymerase complexes and VP2. The polymerase of these novo-formed particles catalyzes the synthesis of complementary minus-strands leading to dsRNA formation. To do so, the polymerase specifically recognizes and binds 4 bases 5'-UGUG-3' in the conserved 3'-sequence of plus-strand RNA templates. VP2 presumably activates the autoinhibited VP1-RNA complex to coordinate packaging and genome replication. Once dsRNA synthesis is complete, the polymerase switches to the transcriptional mode, thus providing secondary transcription. This is RNA-directed RNA polymerase from Rotavirus A (isolate RVA/Human/United States/WI61/1983/G9P1A[8]) (RV-A).